The chain runs to 229 residues: 3-dehydroquinate dehydratase (229 aa).

Residues 33-35 and R65 each bind 3-dehydroquinate; that span reads EWR. H121 functions as the Proton donor/acceptor in the catalytic mechanism. K146 acts as the Schiff-base intermediate with substrate in catalysis. 3-dehydroquinate contacts are provided by R188, S207, and Q211.

Belongs to the type-I 3-dehydroquinase family. Homodimer.

It catalyses the reaction 3-dehydroquinate = 3-dehydroshikimate + H2O. It functions in the pathway metabolic intermediate biosynthesis; chorismate biosynthesis; chorismate from D-erythrose 4-phosphate and phosphoenolpyruvate: step 3/7. Involved in the third step of the chorismate pathway, which leads to the biosynthesis of aromatic amino acids. Catalyzes the cis-dehydration of 3-dehydroquinate (DHQ) and introduces the first double bond of the aromatic ring to yield 3-dehydroshikimate. In Lactococcus lactis subsp. cremoris (strain SK11), this protein is 3-dehydroquinate dehydratase.